The sequence spans 321 residues: tRNA uridine(34) hydroxylase (321 aa).

Positions 135–233 constitute a Rhodanese domain; it reads DDPLTLVIDT…YLEEVPENES (99 aa). Cysteine 193 functions as the Cysteine persulfide intermediate in the catalytic mechanism.

This sequence belongs to the TrhO family.

It carries out the reaction uridine(34) in tRNA + AH2 + O2 = 5-hydroxyuridine(34) in tRNA + A + H2O. Functionally, catalyzes oxygen-dependent 5-hydroxyuridine (ho5U) modification at position 34 in tRNAs. The protein is tRNA uridine(34) hydroxylase of Prochlorococcus marinus (strain SARG / CCMP1375 / SS120).